The chain runs to 307 residues: Bifunctional protein FolD 3 (307 aa).

NADP(+)-binding positions include 169-171 (GRS), serine 194, and isoleucine 235.

The protein belongs to the tetrahydrofolate dehydrogenase/cyclohydrolase family. As to quaternary structure, homodimer.

It carries out the reaction (6R)-5,10-methylene-5,6,7,8-tetrahydrofolate + NADP(+) = (6R)-5,10-methenyltetrahydrofolate + NADPH. The catalysed reaction is (6R)-5,10-methenyltetrahydrofolate + H2O = (6R)-10-formyltetrahydrofolate + H(+). Its pathway is one-carbon metabolism; tetrahydrofolate interconversion. In terms of biological role, catalyzes the oxidation of 5,10-methylenetetrahydrofolate to 5,10-methenyltetrahydrofolate and then the hydrolysis of 5,10-methenyltetrahydrofolate to 10-formyltetrahydrofolate. The polypeptide is Bifunctional protein FolD 3 (Ectopseudomonas mendocina (strain ymp) (Pseudomonas mendocina)).